The following is a 416-amino-acid chain: Phosphoribosylamine--glycine ligase (416 aa).

Residues 107–303 (KDVMACAGVP…LAGLLMAAAT (197 aa)) enclose the ATP-grasp domain. 133 to 184 (LAAFGAPYVVKDDGLAAGKGVVVTDDVEAARAHANACDRVVVEEFLDGPEVS) serves as a coordination point for ATP. Glu-273 and Asn-275 together coordinate Mg(2+).

It belongs to the GARS family. Mg(2+) is required as a cofactor. It depends on Mn(2+) as a cofactor.

It catalyses the reaction 5-phospho-beta-D-ribosylamine + glycine + ATP = N(1)-(5-phospho-beta-D-ribosyl)glycinamide + ADP + phosphate + H(+). The protein operates within purine metabolism; IMP biosynthesis via de novo pathway; N(1)-(5-phospho-D-ribosyl)glycinamide from 5-phospho-alpha-D-ribose 1-diphosphate: step 2/2. This is Phosphoribosylamine--glycine ligase from Streptomyces coelicolor (strain ATCC BAA-471 / A3(2) / M145).